The primary structure comprises 154 residues: Putative ankyrin repeat protein RBE_1220 (154 aa).

2 ANK repeats span residues 78–108 (EKVNILNVAAANNSVTVINYLLDNNIFNVDQ) and 113–142 (NSRTALHSAVKENAMESTKFLLKKEQILIL).

This is Putative ankyrin repeat protein RBE_1220 from Rickettsia bellii (strain RML369-C).